A 1008-amino-acid chain; its full sequence is ATP-dependent zinc metalloprotease FTSH 12, chloroplastic (1008 aa).

The transit peptide at 1–49 directs the protein to the chloroplast; it reads MEIAISYKPNPLISSSTQLLKRSKSFGLVRFPAKYGLGATRKKQLFRVY. The next 2 membrane-spanning stretches (helical) occupy residues 154–174 and 427–447; these read AALF…YVAI and IHYF…LWFI. An ATP-binding site is contributed by 533–540; the sequence is GPPGTGKT. A Zn(2+)-binding site is contributed by H769. Residue E770 is part of the active site. 2 residues coordinate Zn(2+): H773 and D849.

This sequence in the N-terminal section; belongs to the AAA ATPase family. The protein in the C-terminal section; belongs to the peptidase M41 family. Zn(2+) serves as cofactor.

It is found in the plastid. Its subcellular location is the chloroplast thylakoid membrane. Its function is as follows. Probable ATP-dependent zinc metallopeptidase. This is ATP-dependent zinc metalloprotease FTSH 12, chloroplastic (FTSH12) from Arabidopsis thaliana (Mouse-ear cress).